The chain runs to 219 residues: Small ribosomal subunit protein uS3 (219 aa).

Residues 41–110 (IRKIINTEYS…DVSINICEVK (70 aa)) enclose the KH type-2 domain.

It belongs to the universal ribosomal protein uS3 family. Part of the 30S ribosomal subunit. Forms a tight complex with proteins S10 and S14.

Its function is as follows. Binds the lower part of the 30S subunit head. Binds mRNA in the 70S ribosome, positioning it for translation. The protein is Small ribosomal subunit protein uS3 of Orientia tsutsugamushi (strain Ikeda) (Rickettsia tsutsugamushi).